The following is a 279-amino-acid chain: Tetra-spanning protein 1 (279 aa).

2 consecutive transmembrane segments (helical) span residues 25–45 (VWFS…LQAI) and 50–70 (APPF…AIVL). Residue Asn-77 is glycosylated (N-linked (GlcNAc...) asparagine). The chain crosses the membrane as a helical span at residues 100 to 122 (YFILALSMLIDRPILFSLAPYAI). An N-linked (GlcNAc...) asparagine glycan is attached at Asn-143. A helical transmembrane segment spans residues 172-192 (MQLVASLETFLLFRLFFGVFL). Residues 260 to 279 (VGTAQSRPTASSSTTAPSST) form a disordered region. Residues 262 to 279 (TAQSRPTASSSTTAPSST) show a composition bias toward low complexity.

This sequence belongs to the PER33/POM33 family. In terms of assembly, interacts with RTN1 and YOP1.

The protein localises to the golgi apparatus membrane. Its subcellular location is the endoplasmic reticulum membrane. The protein resides in the nucleus membrane. Functionally, required for the correct positioning of the cellular division plane by delimiting the actomyosin ring assembly at the cell equator. The protein is Tetra-spanning protein 1 (tts1) of Schizosaccharomyces pombe (strain 972 / ATCC 24843) (Fission yeast).